The chain runs to 177 residues: Inorganic pyrophosphatase (177 aa).

Substrate contacts are provided by lysine 30, arginine 44, and tyrosine 56. 3 residues coordinate Mg(2+): aspartate 66, aspartate 71, and aspartate 103. Tyrosine 142 lines the substrate pocket.

Belongs to the PPase family. Homohexamer. The cofactor is Mg(2+).

The protein resides in the cytoplasm. It catalyses the reaction diphosphate + H2O = 2 phosphate + H(+). In terms of biological role, catalyzes the hydrolysis of inorganic pyrophosphate (PPi) forming two phosphate ions. This chain is Inorganic pyrophosphatase, found in Agrobacterium fabrum (strain C58 / ATCC 33970) (Agrobacterium tumefaciens (strain C58)).